Here is a 317-residue protein sequence, read N- to C-terminus: Tyrosine--tRNA ligase (317 aa).

Tyr-32 provides a ligand contact to L-tyrosine. A 'HIGH' region motif is present at residues 37–45 (PSGEIHLGH). 4 residues coordinate L-tyrosine: Tyr-152, Gln-156, Asp-159, and Gln-174. Positions 208–212 (KMSSS) match the 'KMSKS' region motif. Ser-211 contributes to the ATP binding site.

The protein belongs to the class-I aminoacyl-tRNA synthetase family. TyrS type 3 subfamily. In terms of assembly, homodimer.

The protein localises to the cytoplasm. It catalyses the reaction tRNA(Tyr) + L-tyrosine + ATP = L-tyrosyl-tRNA(Tyr) + AMP + diphosphate + H(+). Catalyzes the attachment of tyrosine to tRNA(Tyr) in a two-step reaction: tyrosine is first activated by ATP to form Tyr-AMP and then transferred to the acceptor end of tRNA(Tyr). This Methanocorpusculum labreanum (strain ATCC 43576 / DSM 4855 / Z) protein is Tyrosine--tRNA ligase.